The chain runs to 154 residues: UPF0127 protein TSIB_1463 (154 aa).

This sequence belongs to the UPF0127 family.

This is UPF0127 protein TSIB_1463 from Thermococcus sibiricus (strain DSM 12597 / MM 739).